Consider the following 509-residue polypeptide: Sulfoacetate--CoA ligase (509 aa).

The interval 320-340 (AFSNPLDPGQRRIGSIGRPSG) is disordered.

The protein belongs to the ATP-dependent AMP-binding enzyme family.

The protein resides in the cytoplasm. It catalyses the reaction sulfoacetate + ATP + CoA = sulfoacetyl-CoA + AMP + diphosphate. Functionally, involved in the degradation of sulfoacetate, a widespread natural product. Catalyzes the CoA- and ATP-dependent conversion of sulfoacetate to sulfoacetyl-CoA and AMP. In Cupriavidus necator (strain ATCC 17699 / DSM 428 / KCTC 22496 / NCIMB 10442 / H16 / Stanier 337) (Ralstonia eutropha), this protein is Sulfoacetate--CoA ligase.